A 572-amino-acid chain; its full sequence is NADH-ubiquinone oxidoreductase chain 5 (572 aa).

Transmembrane regions (helical) follow at residues F6–I26, V44–I64, I86–I106, S107–Q127, V147–Y167, I179–L201, P208–R230, M234–M254, I268–Y288, L291–G311, S337–Y357, N372–F394, I422–V442, F454–V474, L479–F499, W524–I544, and F552–L572.

It belongs to the complex I subunit 5 family.

Its subcellular location is the mitochondrion inner membrane. The catalysed reaction is a ubiquinone + NADH + 5 H(+)(in) = a ubiquinol + NAD(+) + 4 H(+)(out). In terms of biological role, core subunit of the mitochondrial membrane respiratory chain NADH dehydrogenase (Complex I) that is believed to belong to the minimal assembly required for catalysis. Complex I functions in the transfer of electrons from NADH to the respiratory chain. The immediate electron acceptor for the enzyme is believed to be ubiquinone. This Locusta migratoria (Migratory locust) protein is NADH-ubiquinone oxidoreductase chain 5 (ND5).